Consider the following 228-residue polypeptide: Cytochrome c oxidase subunit 2 (228 aa).

At 1–14 (MAYPLQLGFQDATS) the chain is on the mitochondrial intermembrane side. The helical transmembrane segment at 15–45 (PVMEELLHFHDHTLMIIFLISSLVLYIIMLM) threads the bilayer. Topologically, residues 46–59 (LTSKLVHTNMMNVQ) are mitochondrial matrix. The helical transmembrane segment at 60–87 (EMEMIWTILPAIILILIALPSLHTLYMM) threads the bilayer. Topologically, residues 88–228 (DEINNPLLTI…FENWSASLAQ (141 aa)) are mitochondrial intermembrane. Residues His-161, Cys-196, Glu-198, Cys-200, His-204, and Met-207 each coordinate Cu cation. Mg(2+) is bound at residue Glu-198. Tyr-218 is subject to Phosphotyrosine.

Belongs to the cytochrome c oxidase subunit 2 family. In terms of assembly, component of the cytochrome c oxidase (complex IV, CIV), a multisubunit enzyme composed of 14 subunits. The complex is composed of a catalytic core of 3 subunits MT-CO1, MT-CO2 and MT-CO3, encoded in the mitochondrial DNA, and 11 supernumerary subunits COX4I, COX5A, COX5B, COX6A, COX6B, COX6C, COX7A, COX7B, COX7C, COX8 and NDUFA4, which are encoded in the nuclear genome. The complex exists as a monomer or a dimer and forms supercomplexes (SCs) in the inner mitochondrial membrane with NADH-ubiquinone oxidoreductase (complex I, CI) and ubiquinol-cytochrome c oxidoreductase (cytochrome b-c1 complex, complex III, CIII), resulting in different assemblies (supercomplex SCI(1)III(2)IV(1) and megacomplex MCI(2)III(2)IV(2)). Found in a complex with TMEM177, COA6, COX18, COX20, SCO1 and SCO2. Interacts with TMEM177 in a COX20-dependent manner. Interacts with COX20. Interacts with COX16. It depends on Cu cation as a cofactor.

It is found in the mitochondrion inner membrane. The catalysed reaction is 4 Fe(II)-[cytochrome c] + O2 + 8 H(+)(in) = 4 Fe(III)-[cytochrome c] + 2 H2O + 4 H(+)(out). Functionally, component of the cytochrome c oxidase, the last enzyme in the mitochondrial electron transport chain which drives oxidative phosphorylation. The respiratory chain contains 3 multisubunit complexes succinate dehydrogenase (complex II, CII), ubiquinol-cytochrome c oxidoreductase (cytochrome b-c1 complex, complex III, CIII) and cytochrome c oxidase (complex IV, CIV), that cooperate to transfer electrons derived from NADH and succinate to molecular oxygen, creating an electrochemical gradient over the inner membrane that drives transmembrane transport and the ATP synthase. Cytochrome c oxidase is the component of the respiratory chain that catalyzes the reduction of oxygen to water. Electrons originating from reduced cytochrome c in the intermembrane space (IMS) are transferred via the dinuclear copper A center (CU(A)) of subunit 2 and heme A of subunit 1 to the active site in subunit 1, a binuclear center (BNC) formed by heme A3 and copper B (CU(B)). The BNC reduces molecular oxygen to 2 water molecules using 4 electrons from cytochrome c in the IMS and 4 protons from the mitochondrial matrix. The chain is Cytochrome c oxidase subunit 2 (MT-CO2) from Loxodonta africana (African elephant).